A 642-amino-acid polypeptide reads, in one-letter code: 1-deoxy-D-xylulose-5-phosphate synthase (642 aa).

Residues histidine 79 and 120 to 122 (AHS) each bind thiamine diphosphate. Aspartate 151 contacts Mg(2+). Residues 152–153 (GS), asparagine 180, tyrosine 290, and glutamate 372 contribute to the thiamine diphosphate site. Asparagine 180 lines the Mg(2+) pocket.

The protein belongs to the transketolase family. DXPS subfamily. In terms of assembly, homodimer. It depends on Mg(2+) as a cofactor. The cofactor is thiamine diphosphate.

The enzyme catalyses D-glyceraldehyde 3-phosphate + pyruvate + H(+) = 1-deoxy-D-xylulose 5-phosphate + CO2. Its pathway is metabolic intermediate biosynthesis; 1-deoxy-D-xylulose 5-phosphate biosynthesis; 1-deoxy-D-xylulose 5-phosphate from D-glyceraldehyde 3-phosphate and pyruvate: step 1/1. Its function is as follows. Catalyzes the acyloin condensation reaction between C atoms 2 and 3 of pyruvate and glyceraldehyde 3-phosphate to yield 1-deoxy-D-xylulose-5-phosphate (DXP). The sequence is that of 1-deoxy-D-xylulose-5-phosphate synthase from Beijerinckia indica subsp. indica (strain ATCC 9039 / DSM 1715 / NCIMB 8712).